The sequence spans 300 residues: F-box/LRR-repeat protein 15 (300 aa).

Residue Met1 is modified to N-acetylmethionine. One can recognise an F-box domain in the interval Phe19–Asp66. The tract at residues Asn113–Arg269 is interaction with SMURF1. LRR repeat units follow at residues Arg141–Ala162, Ala167–Ala188, Gly194–Ala215, Glu220–Ala241, and Val246–Arg267.

This sequence belongs to the FBXL15 family. Part of the SCF (SKP1-CUL1-F-box) E3 ubiquitin-protein ligase complex SCF(FBXL15) composed of CUL1, SKP1, RBX1 and FBXL15.

It is found in the cytoplasm. Its pathway is protein modification; protein ubiquitination. Its function is as follows. Substrate recognition component of a SCF (SKP1-CUL1-F-box protein) E3 ubiquitin-protein ligase complex which mediates the ubiquitination and subsequent proteasomal degradation of SMURF1, thereby acting as a positive regulator of the BMP signaling pathway. Required for dorsal/ventral pattern formation and bone mass maintenance. Also mediates ubiquitination of SMURF2 and WWP2. The sequence is that of F-box/LRR-repeat protein 15 (FBXL15) from Homo sapiens (Human).